Consider the following 474-residue polypeptide: Aspartate ammonia-lyase (474 aa).

Residues T105, S144, T145, N146, and T191 each coordinate L-aspartate. The interval 322–331 (GSSIMPGKVN) is SS loop. S323 acts as the Proton acceptor in catalysis. L-aspartate is bound by residues S324 and K329.

This sequence belongs to the class-II fumarase/aspartase family. Aspartase subfamily. In terms of assembly, homotetramer.

The enzyme catalyses L-aspartate = fumarate + NH4(+). The catalysed reaction is L-phenylalanine = (E)-cinnamate + NH4(+). Does not require any divalent metal ion for activation of catalysis, but the activity is slightly increased in the presence of Mg(2+), Mn(2+), Ca(2+) or Co(2+). Functionally, catalyzes the reversible conversion of L-aspartate to fumarate and ammonia. Can also utilize L-phenylalanine to form cinnamic acid. Exhibits the highest specific activity towards L-phenylalanine, but catalytic efficiency is 3-fold higher with L-aspartate. The chain is Aspartate ammonia-lyase from Pseudomonas aeruginosa (strain ATCC 15692 / DSM 22644 / CIP 104116 / JCM 14847 / LMG 12228 / 1C / PRS 101 / PAO1).